The chain runs to 197 residues: RILP-like protein 2 (197 aa).

The tract at residues 1–24 (MEDHPVREEEDGEEDEGALAKSPL) is disordered. Residues 8 to 17 (EEEDGEEDEG) show a composition bias toward acidic residues. An RH1 domain is found at 14 to 96 (EDEGALAKSP…KQEVEGLRKA (83 aa)). The stretch at 69–153 (VNEGSLAVEE…VQEELQCYRS (85 aa)) forms a coiled coil. The RH2 domain occupies 119–184 (RPRFTLQELR…GNGEKEERTI (66 aa)).

The protein belongs to the RILPL family. Homodimer. Interacts with RAC1. Interacts (via N-terminus) with MYO5A, the interaction is required for its role in dendrite formation. Interacts with RAB8A; interaction is dependent on the phosphorylation of RAB8A on 'Thr-72'. Interacts with RAB10 and RAB12; interaction is dependent on the phosphorylation of 'Thr-73' on RAB10 and 'Ser-105' on RAB12.

The protein resides in the cytoplasm. It localises to the cytosol. The protein localises to the cytoskeleton. It is found in the microtubule organizing center. Its subcellular location is the centrosome. The protein resides in the cell projection. It localises to the cilium. Involved in cell shape and neuronal morphogenesis, positively regulating the establishment and maintenance of dendritic spines. Plays a role in cellular protein transport, including protein transport away from primary cilia. May function via activation of RAC1 and PAK1. The chain is RILP-like protein 2 (Rilpl2) from Mus musculus (Mouse).